Reading from the N-terminus, the 220-residue chain is Transcriptional regulatory protein LnrK (220 aa).

The region spanning 3–119 (KIIITDDQDI…TIVKAVMTVH (117 aa)) is the Response regulatory domain. Position 54 is a 4-aspartylphosphate (Asp54). The HTH luxR-type domain maps to 151 to 216 (KPNELLDLTE…QAAIYSVRYG (66 aa)). Positions 175–194 (NKEIAEKLYITEGTVKNHVS) form a DNA-binding region, H-T-H motif.

Post-translationally, phosphorylated by LnrJ.

The protein localises to the cytoplasm. Its function is as follows. Required for resistance to linearmycins, a family of antibiotic-specialized metabolites produced by some streptomycetes. Member of the two-component regulatory system LnrJ/LnrK, which induces expression of the LnrLMN ABC transporter in response to linearmycins and other polyenes. Probably binds to the promoter region of the lnrLMN operon and directly regulates its expression. May also promote biofilm formation. This chain is Transcriptional regulatory protein LnrK, found in Bacillus subtilis (strain 168).